We begin with the raw amino-acid sequence, 257 residues long: Diacetyl reductase [(S)-acetoin forming] (257 aa).

Position 6-30 (6-30) interacts with NAD(+); sequence IITGAAGGLGKGIAERLANDGFNIV. Serine 139 contributes to the substrate binding site. Tyrosine 152 acts as the Proton acceptor in catalysis. The active site involves lysine 156.

Belongs to the short-chain dehydrogenases/reductases (SDR) family.

The enzyme catalyses (S)-acetoin + NAD(+) = diacetyl + NADH + H(+). Its function is as follows. Catalyzes the irreversible reduction of 2,3-butanediol to (S)-acetoin in the presence of NADH. In Staphylococcus epidermidis (strain ATCC 12228 / FDA PCI 1200), this protein is Diacetyl reductase [(S)-acetoin forming] (butA).